Here is a 724-residue protein sequence, read N- to C-terminus: Tripartite terminase subunit 1 (724 aa).

Residues 175–203 form a C3H1-type zinc finger; the sequence is CAVCFEELCVTANQGEATHRRLLGCVCDH. The disordered stretch occupies residues 410-445; that stretch reads GGDDADADGGAAGGADAGDGGVGDEDGPGAPPPADA. Positions 419 to 430 are enriched in gly residues; the sequence is GAAGGADAGDGG. An ATP-binding site is contributed by 652-659; sequence FRSVFHCG.

It belongs to the herpesviridae TRM1 protein family. In terms of assembly, associates with TRM2 and TRM3 to form the tripartite terminase complex. Interacts with portal protein.

The protein resides in the host nucleus. Functionally, component of the molecular motor that translocates viral genomic DNA in empty capsid during DNA packaging. Forms a tripartite terminase complex together with TRM2 and TRM3 in the host cytoplasm. Once the complex reaches the host nucleus, it interacts with the capsid portal vertex. This portal forms a ring in which genomic DNA is translocated into the capsid. TRM1 carries an endonuclease activity that plays an important role for the cleavage of concatemeric viral DNA into unit length genomes. In Suid herpesvirus 1 (strain Indiana-Funkhauser / Becker) (SuHV-1), this protein is Tripartite terminase subunit 1.